The following is a 291-amino-acid chain: Probable 2-(5''-triphosphoribosyl)-3'-dephosphocoenzyme-A synthase (291 aa).

This sequence belongs to the CitG/MdcB family.

It carries out the reaction 3'-dephospho-CoA + ATP = 2'-(5''-triphospho-alpha-D-ribosyl)-3'-dephospho-CoA + adenine. Functionally, involved in the formation of 2-(5''-phosphoribosyl)-3'-dephosphocoenzyme-A, the prosthetic group of the acyl-carrier protein of the malonate decarboxylase. The chain is Probable 2-(5''-triphosphoribosyl)-3'-dephosphocoenzyme-A synthase from Pseudomonas syringae pv. syringae (strain B728a).